Consider the following 462-residue polypeptide: MAATVNLELDPIFLKALGFLHSKSKDSAEKLKALLDESLARGIDSSYRPSQKDVEPPKISSTKNISIKQEPKISSSLPSGNNNGKVLTTEKVKKEAEKRPADKMKSDITEGVDIPKKPRLEKPETQSSPITVQSSKDLPMADLSSFEETSADDFAMEMGLACVVCRQMMVASGNQLVECQECHNLYHRDCHKPQVTDKEANDPRLVWYCARCTRQMKRMAQKTQKPPQKPAPAVVSVTPAVKDPLVKKPETKLKQETTFLAFKRTEVKTSTVISGNSSSASISSSVTSGLTGWAAFAAKTSSAGPSTAKLSSTTQNNTGKPATSSANQKPVGLTGLATSSKGGIGSKIGSNNSTTPTVPLKPPPPLTLGKTGLSRSVSCDNVSKVGLPSPSSLVPGSSSQLSGNGNSGTPGPSGSTASKTTSESSSSPSASLKGPTSQESQLNAMKRLQMVKKKAAQKKLKK.

Positions 42 to 132 are disordered; the sequence is GIDSSYRPSQ…PETQSSPITV (91 aa). A compositionally biased stretch (polar residues) spans 59 to 86; it reads ISSTKNISIKQEPKISSSLPSGNNNGKV. Lys-68 is covalently cross-linked (Glycyl lysine isopeptide (Lys-Gly) (interchain with G-Cter in SUMO2)). Residues 88 to 124 show a composition bias toward basic and acidic residues; it reads TTEKVKKEAEKRPADKMKSDITEGVDIPKKPRLEKPE. Ser-128 is modified (phosphoserine). A PHD-type zinc finger spans residues 159–215; that stretch reads GLACVVCRQMMVASGNQLVECQECHNLYHRDCHKPQVTDKEANDPRLVWYCARCTRQ. A Glycyl lysine isopeptide (Lys-Gly) (interchain with G-Cter in SUMO2) cross-link involves residue Lys-254. Residues 301 to 328 are compositionally biased toward polar residues; the sequence is SSAGPSTAKLSSTTQNNTGKPATSSANQ. Residues 301–462 form a disordered region; it reads SSAGPSTAKL…KKAAQKKLKK (162 aa). 2 stretches are compositionally biased toward low complexity: residues 347–358 and 382–437; these read KIGSNNSTTPTV and VSKV…GPTS. The segment covering 449–462 has biased composition (basic residues); the sequence is QMVKKKAAQKKLKK.

This sequence belongs to the Integrator subunit 12 family. Component of the Integrator complex, composed of core subunits INTS1, INTS2, INTS3, INTS4, INTS5, INTS6, INTS7, INTS8, INTS9/RC74, INTS10, INTS11/CPSF3L, INTS12, INTS13, INTS14 and INTS15. The core complex associates with protein phosphatase 2A subunits PPP2CA and PPP2R1A, to form the Integrator-PP2A (INTAC) complex. Dephosphorylated at Ser-128 by the PNUTS-PP1 complex, promoting RNA polymerase II transcription pause-release.

The protein localises to the nucleus. In terms of biological role, component of the integrator complex, a multiprotein complex that terminates RNA polymerase II (Pol II) transcription in the promoter-proximal region of genes. The integrator complex provides a quality checkpoint during transcription elongation by driving premature transcription termination of transcripts that are unfavorably configured for transcriptional elongation: the complex terminates transcription by (1) catalyzing dephosphorylation of the C-terminal domain (CTD) of Pol II subunit POLR2A/RPB1 and SUPT5H/SPT5, (2) degrading the exiting nascent RNA transcript via endonuclease activity and (3) promoting the release of Pol II from bound DNA. The integrator complex is also involved in terminating the synthesis of non-coding Pol II transcripts, such as enhancer RNAs (eRNAs), small nuclear RNAs (snRNAs), telomerase RNAs and long non-coding RNAs (lncRNAs). Mediates recruitment of cytoplasmic dynein to the nuclear envelope, probably as component of the integrator complex. The polypeptide is Integrator complex subunit 12 (INTS12) (Pongo abelii (Sumatran orangutan)).